A 156-amino-acid chain; its full sequence is 6,7-dimethyl-8-ribityllumazine synthase (156 aa).

Residues Phe23, 57–59 (SWE), and 81–83 (AVV) each bind 5-amino-6-(D-ribitylamino)uracil. Residue 86–87 (ET) coordinates (2S)-2-hydroxy-3-oxobutyl phosphate. His89 (proton donor) is an active-site residue. Phe114 contacts 5-amino-6-(D-ribitylamino)uracil. Arg128 is a (2S)-2-hydroxy-3-oxobutyl phosphate binding site.

Belongs to the DMRL synthase family.

It carries out the reaction (2S)-2-hydroxy-3-oxobutyl phosphate + 5-amino-6-(D-ribitylamino)uracil = 6,7-dimethyl-8-(1-D-ribityl)lumazine + phosphate + 2 H2O + H(+). The protein operates within cofactor biosynthesis; riboflavin biosynthesis; riboflavin from 2-hydroxy-3-oxobutyl phosphate and 5-amino-6-(D-ribitylamino)uracil: step 1/2. Its function is as follows. Catalyzes the formation of 6,7-dimethyl-8-ribityllumazine by condensation of 5-amino-6-(D-ribitylamino)uracil with 3,4-dihydroxy-2-butanone 4-phosphate. This is the penultimate step in the biosynthesis of riboflavin. In Salinibacter ruber (strain DSM 13855 / M31), this protein is 6,7-dimethyl-8-ribityllumazine synthase.